Consider the following 223-residue polypeptide: Small ribosomal subunit protein uS3 (223 aa).

In terms of domain architecture, KH type-2 spans 38 to 106 (IREFIAKQLT…RVHINIVEIK (69 aa)).

Belongs to the universal ribosomal protein uS3 family. As to quaternary structure, part of the 30S ribosomal subunit. Forms a tight complex with proteins S10 and S14.

In terms of biological role, binds the lower part of the 30S subunit head. Binds mRNA in the 70S ribosome, positioning it for translation. This is Small ribosomal subunit protein uS3 from Pediococcus pentosaceus (strain ATCC 25745 / CCUG 21536 / LMG 10740 / 183-1w).